A 654-amino-acid chain; its full sequence is tRNA 5-methylaminomethyl-2-thiouridine biosynthesis bifunctional protein MnmC (654 aa).

The segment at 1–236 is tRNA (mnm(5)s(2)U34)-methyltransferase; that stretch reads MTDRIVPATL…KRAMLVGEFA (236 aa). The interval 260–654 is FAD-dependent cmnm(5)s(2)U34 oxidoreductase; it reads IGAGLAGCAA…IRALRRGRVA (395 aa).

In the N-terminal section; belongs to the methyltransferase superfamily. tRNA (mnm(5)s(2)U34)-methyltransferase family. This sequence in the C-terminal section; belongs to the DAO family. FAD is required as a cofactor.

Its subcellular location is the cytoplasm. It carries out the reaction 5-aminomethyl-2-thiouridine(34) in tRNA + S-adenosyl-L-methionine = 5-methylaminomethyl-2-thiouridine(34) in tRNA + S-adenosyl-L-homocysteine + H(+). Its function is as follows. Catalyzes the last two steps in the biosynthesis of 5-methylaminomethyl-2-thiouridine (mnm(5)s(2)U) at the wobble position (U34) in tRNA. Catalyzes the FAD-dependent demodification of cmnm(5)s(2)U34 to nm(5)s(2)U34, followed by the transfer of a methyl group from S-adenosyl-L-methionine to nm(5)s(2)U34, to form mnm(5)s(2)U34. The polypeptide is tRNA 5-methylaminomethyl-2-thiouridine biosynthesis bifunctional protein MnmC (Burkholderia thailandensis (strain ATCC 700388 / DSM 13276 / CCUG 48851 / CIP 106301 / E264)).